A 573-amino-acid chain; its full sequence is MSEDTQTATENKPDIKPRSRVVTDGIHAAPARGMFRAVGMGDDDFAKPQIGVASSWNEITPCNLSLNRLAQGAKEGVHAGGGFPMQFGTISVSDGISMGHEGMHFSLVSREVIADSVETVMQAERIDGSVLLAGCDKSLPGMLMAAARLDLASVFLYAGSIMPGWVKLEDGSEKEVTLIDAFEAVGACAAGKMSRGDLDRIERAICPGEGACGGMYTANTMACIGEALGMSLPGSAAPPSADRRRDEFARKSGEAVVNLLRLGITARDIMTKKAFENAIAVTMAFGGSTNAVLHLLAIAREAEVELTLDDFNRIGDKIPHLGDLKPFGRYVMTDVDKIGGVPVIMKALLDAGLLHGDCLTVTGKTLAENLASINPPDLDGKILRALDNPIHKTGGITILHGSMAPEGAVVKSAGFDADVFEGTARVFEREQGALDALDNGKINKGDVVVIRYEGPKGGPGMREMLAITGAIKGAGLGKDVLLLTDGRFSGGTTGLCIGHVAPEAVDGGPIAFVKDGDRIRVDIAARSFDLLVDEAELESRKVGWEPLPAKFTKGVLAKYAKLVHSASTGAYCG.

Cys62 contacts [2Fe-2S] cluster. Asp94 contacts Mg(2+). Cys135 serves as a coordination point for [2Fe-2S] cluster. Positions 136 and 137 each coordinate Mg(2+). N6-carboxylysine is present on Lys137. Position 212 (Cys212) interacts with [2Fe-2S] cluster. A Mg(2+)-binding site is contributed by Glu463. Ser489 (proton acceptor) is an active-site residue.

It belongs to the IlvD/Edd family. In terms of assembly, homodimer. The cofactor is [2Fe-2S] cluster. Mg(2+) serves as cofactor.

The catalysed reaction is (2R)-2,3-dihydroxy-3-methylbutanoate = 3-methyl-2-oxobutanoate + H2O. It catalyses the reaction (2R,3R)-2,3-dihydroxy-3-methylpentanoate = (S)-3-methyl-2-oxopentanoate + H2O. Its pathway is amino-acid biosynthesis; L-isoleucine biosynthesis; L-isoleucine from 2-oxobutanoate: step 3/4. It functions in the pathway amino-acid biosynthesis; L-valine biosynthesis; L-valine from pyruvate: step 3/4. In terms of biological role, functions in the biosynthesis of branched-chain amino acids. Catalyzes the dehydration of (2R,3R)-2,3-dihydroxy-3-methylpentanoate (2,3-dihydroxy-3-methylvalerate) into 2-oxo-3-methylpentanoate (2-oxo-3-methylvalerate) and of (2R)-2,3-dihydroxy-3-methylbutanoate (2,3-dihydroxyisovalerate) into 2-oxo-3-methylbutanoate (2-oxoisovalerate), the penultimate precursor to L-isoleucine and L-valine, respectively. This chain is Dihydroxy-acid dehydratase, found in Arthrobacter sp. (strain FB24).